A 130-amino-acid polypeptide reads, in one-letter code: Cuticle protein 14 isoform a (130 aa).

The Chitin-binding type R&amp;R domain maps to 24-90 (IGNYNFGYNE…NVHTNEPGTD (67 aa)).

The sequence is that of Cuticle protein 14 isoform a from Limulus polyphemus (Atlantic horseshoe crab).